The primary structure comprises 278 residues: Undecaprenyl-diphosphatase 2 (278 aa).

A run of 7 helical transmembrane segments spans residues 43–63 (GAAF…VYFW), 88–108 (ARLG…GLFF), 119–139 (LYIT…ADRI), 149–169 (LIWR…IPGV), 194–214 (FLLA…KSIG), 226–246 (LATL…LKLV), and 254–274 (FVWY…TGVI).

This sequence belongs to the UppP family.

It is found in the cell inner membrane. It catalyses the reaction di-trans,octa-cis-undecaprenyl diphosphate + H2O = di-trans,octa-cis-undecaprenyl phosphate + phosphate + H(+). Catalyzes the dephosphorylation of undecaprenyl diphosphate (UPP). Confers resistance to bacitracin. The sequence is that of Undecaprenyl-diphosphatase 2 from Agrobacterium fabrum (strain C58 / ATCC 33970) (Agrobacterium tumefaciens (strain C58)).